The sequence spans 358 residues: Probable ABC transporter periplasmic-binding protein y4fP (358 aa).

A signal peptide spans 1–46 (MRNVIKLTWSRRKRSASLDKGENIMKLAFAFATAAIVVAAAFPALA).

The protein belongs to the bacterial solute-binding protein 1 family.

The protein resides in the periplasm. Probably part of the binding-protein-dependent transport system y4fNOP. This chain is Probable ABC transporter periplasmic-binding protein y4fP, found in Sinorhizobium fredii (strain NBRC 101917 / NGR234).